A 142-amino-acid polypeptide reads, in one-letter code: Hemoglobin subunit alpha-A (142 aa).

Residues 2 to 142 (VLSAADKTNV…VGTVLTAKYR (141 aa)) form the Globin domain. Residue histidine 59 participates in O2 binding. Histidine 88 contributes to the heme b binding site.

It belongs to the globin family. As to quaternary structure, heterotetramer of two alpha chains and two beta chains. In terms of tissue distribution, red blood cells.

Involved in oxygen transport from the lung to the various peripheral tissues. The chain is Hemoglobin subunit alpha-A (HBAA) from Coturnix japonica (Japanese quail).